Here is a 119-residue protein sequence, read N- to C-terminus: Na(+)/H(+) antiporter subunit G (119 aa).

Helical transmembrane passes span 7-29 (IISI…IIRF), 44-61 (TLGV…FFLV), and 66-88 (VGKL…MMMG).

Belongs to the CPA3 antiporters (TC 2.A.63) subunit G family. As to quaternary structure, forms a heterooligomeric complex that consists of seven subunits: MrpA, MrpB, MrpC, MrpD, MrpE, MrpF and MrpG.

Its subcellular location is the cell membrane. In terms of biological role, mnh complex is a Na(+)Li(+)/H(+) antiporter involved in Na(+) and/or Li(+) excretion and Na(+) resistance. Na(+)/H(+) antiport consumes a transmembrane electrical potential, and is thus inferred to be electrogenic. Does not transport K(+), Ca(2+) or Mg(2+). The polypeptide is Na(+)/H(+) antiporter subunit G (mrpG) (Alkalihalophilus pseudofirmus (strain ATCC BAA-2126 / JCM 17055 / OF4) (Bacillus pseudofirmus)).